Here is a 152-residue protein sequence, read N- to C-terminus: SsrA-binding protein (152 aa).

The protein belongs to the SmpB family.

The protein resides in the cytoplasm. In terms of biological role, required for rescue of stalled ribosomes mediated by trans-translation. Binds to transfer-messenger RNA (tmRNA), required for stable association of tmRNA with ribosomes. tmRNA and SmpB together mimic tRNA shape, replacing the anticodon stem-loop with SmpB. tmRNA is encoded by the ssrA gene; the 2 termini fold to resemble tRNA(Ala) and it encodes a 'tag peptide', a short internal open reading frame. During trans-translation Ala-aminoacylated tmRNA acts like a tRNA, entering the A-site of stalled ribosomes, displacing the stalled mRNA. The ribosome then switches to translate the ORF on the tmRNA; the nascent peptide is terminated with the 'tag peptide' encoded by the tmRNA and targeted for degradation. The ribosome is freed to recommence translation, which seems to be the essential function of trans-translation. This chain is SsrA-binding protein, found in Rickettsia conorii (strain ATCC VR-613 / Malish 7).